The following is a 1216-amino-acid chain: Apical endosomal glycoprotein (1216 aa).

A signal peptide spans Met1–Gly21. At Lys22–Ser1155 the chain is on the extracellular side. The LDL-receptor class A 1; truncated domain maps to Asp27 to Phe54. The 163-residue stretch at Asn62–Leu224 folds into the MAM 1 domain. An N-linked (GlcNAc...) asparagine glycan is attached at Asn205. The LDL-receptor class A 2 domain maps to Ala229–His269. 3 cysteine pairs are disulfide-bonded: Cys231-Cys243, Cys238-Cys256, and Cys250-Cys267. The MAM 2 domain occupies Ser268–Leu427. Asn291, Asn341, and Asn368 each carry an N-linked (GlcNAc...) asparagine glycan. Residues Arg454–Thr491 enclose the LDL-receptor class A 3 domain. 3 disulfide bridges follow: Cys456/Cys467, Cys463/Cys480, and Cys474/Cys489. 4 MAM domains span residues Thr492–Pro647, Asp654–Ala813, Trp812–Gln973, and Ala972–Gln1142. The N-linked (GlcNAc...) asparagine glycan is linked to Asn639. Asn839 carries N-linked (GlcNAc...) asparagine glycosylation. The chain crosses the membrane as a helical span at residues Val1156–Trp1176. Over His1177–Pro1216 the chain is Cytoplasmic.

Apical endosomal tubules of developing rat intestinal epithelial cells.

It localises to the membrane. Probably involved in the sorting and selective transport of receptors and ligands across polarized epithelia. This is Apical endosomal glycoprotein (Mamdc4) from Rattus norvegicus (Rat).